A 739-amino-acid polypeptide reads, in one-letter code: Phosphoribosylformylglycinamidine synthase subunit PurL (739 aa).

The active site involves histidine 54. ATP-binding residues include tyrosine 57 and lysine 96. Glutamate 98 lines the Mg(2+) pocket. Substrate-binding positions include 99–102 (SHNH) and arginine 121. Histidine 100 functions as the Proton acceptor in the catalytic mechanism. Mg(2+) is bound at residue aspartate 122. A substrate-binding site is contributed by glutamine 245. Position 275 (aspartate 275) interacts with Mg(2+). 319–321 (ESQ) is a binding site for substrate. Aspartate 504 and glycine 541 together coordinate ATP. Residue asparagine 542 coordinates Mg(2+). Residue serine 544 participates in substrate binding.

This sequence belongs to the FGAMS family. As to quaternary structure, monomer. Part of the FGAM synthase complex composed of 1 PurL, 1 PurQ and 2 PurS subunits.

Its subcellular location is the cytoplasm. It carries out the reaction N(2)-formyl-N(1)-(5-phospho-beta-D-ribosyl)glycinamide + L-glutamine + ATP + H2O = 2-formamido-N(1)-(5-O-phospho-beta-D-ribosyl)acetamidine + L-glutamate + ADP + phosphate + H(+). It participates in purine metabolism; IMP biosynthesis via de novo pathway; 5-amino-1-(5-phospho-D-ribosyl)imidazole from N(2)-formyl-N(1)-(5-phospho-D-ribosyl)glycinamide: step 1/2. Functionally, part of the phosphoribosylformylglycinamidine synthase complex involved in the purines biosynthetic pathway. Catalyzes the ATP-dependent conversion of formylglycinamide ribonucleotide (FGAR) and glutamine to yield formylglycinamidine ribonucleotide (FGAM) and glutamate. The FGAM synthase complex is composed of three subunits. PurQ produces an ammonia molecule by converting glutamine to glutamate. PurL transfers the ammonia molecule to FGAR to form FGAM in an ATP-dependent manner. PurS interacts with PurQ and PurL and is thought to assist in the transfer of the ammonia molecule from PurQ to PurL. This is Phosphoribosylformylglycinamidine synthase subunit PurL from Lactococcus lactis subsp. cremoris (strain SK11).